The chain runs to 857 residues: Aminopeptidase N (857 aa).

Residues Glu130 and 264–268 (GAMEN) each bind substrate. Residue His298 coordinates Zn(2+). Glu299 acts as the Proton acceptor in catalysis. Zn(2+)-binding residues include His302 and Glu321.

It belongs to the peptidase M1 family. Monomer. Zn(2+) is required as a cofactor. Post-translationally, the N-terminus is blocked.

The protein resides in the cytoplasm. The enzyme catalyses Release of an N-terminal amino acid, Xaa-|-Yaa- from a peptide, amide or arylamide. Xaa is preferably Ala, but may be most amino acids including Pro (slow action). When a terminal hydrophobic residue is followed by a prolyl residue, the two may be released as an intact Xaa-Pro dipeptide.. Functionally, aminopeptidase with broad substrate specificity to several peptides. Shows strong preference for leucine but also cleaves next to Arg and Lys in peptide-bond-containing substrates. The chain is Aminopeptidase N (pepN) from Streptomyces lividans.